A 1416-amino-acid chain; its full sequence is DNA-directed RNA polymerase subunit beta' (1416 aa).

4 residues coordinate Zn(2+): Cys71, Cys73, Cys86, and Cys89. Mg(2+) is bound by residues Asp461, Asp463, and Asp465. Zn(2+)-binding residues include Cys815, Cys889, Cys896, and Cys899.

The protein belongs to the RNA polymerase beta' chain family. As to quaternary structure, the RNAP catalytic core consists of 2 alpha, 1 beta, 1 beta' and 1 omega subunit. When a sigma factor is associated with the core the holoenzyme is formed, which can initiate transcription. Requires Mg(2+) as cofactor. Zn(2+) is required as a cofactor.

The catalysed reaction is RNA(n) + a ribonucleoside 5'-triphosphate = RNA(n+1) + diphosphate. In terms of biological role, DNA-dependent RNA polymerase catalyzes the transcription of DNA into RNA using the four ribonucleoside triphosphates as substrates. The chain is DNA-directed RNA polymerase subunit beta' from Haemophilus influenzae (strain PittGG).